We begin with the raw amino-acid sequence, 153 residues long: Small ribosomal subunit protein uS5 (153 aa).

The region spanning 15–78 (FQEVVVNIGR…DDAFKNLIHV (64 aa)) is the S5 DRBM domain.

Belongs to the universal ribosomal protein uS5 family. Part of the 30S ribosomal subunit. Contacts proteins S4 and S8.

Its function is as follows. With S4 and S12 plays an important role in translational accuracy. Functionally, located at the back of the 30S subunit body where it stabilizes the conformation of the head with respect to the body. The sequence is that of Small ribosomal subunit protein uS5 from Helicobacter pylori (strain P12).